The following is a 61-amino-acid chain: Small ribosomal subunit protein uS14 (61 aa).

Positions 24, 27, 40, and 43 each coordinate Zn(2+).

This sequence belongs to the universal ribosomal protein uS14 family. Zinc-binding uS14 subfamily. In terms of assembly, part of the 30S ribosomal subunit. Contacts proteins S3 and S10. Zn(2+) is required as a cofactor.

Its function is as follows. Binds 16S rRNA, required for the assembly of 30S particles and may also be responsible for determining the conformation of the 16S rRNA at the A site. This chain is Small ribosomal subunit protein uS14, found in Desulfatibacillum aliphaticivorans.